The primary structure comprises 202 residues: Dephospho-CoA kinase (202 aa).

In terms of domain architecture, DPCK spans 6–202; sequence KISVTGDPSS…QCFKALKGTI (197 aa). An ATP-binding site is contributed by 14-19; the sequence is SSGKTE.

Belongs to the CoaE family.

The protein localises to the cytoplasm. It carries out the reaction 3'-dephospho-CoA + ATP = ADP + CoA + H(+). It participates in cofactor biosynthesis; coenzyme A biosynthesis; CoA from (R)-pantothenate: step 5/5. Catalyzes the phosphorylation of the 3'-hydroxyl group of dephosphocoenzyme A to form coenzyme A. In Chlamydia muridarum (strain MoPn / Nigg), this protein is Dephospho-CoA kinase.